The chain runs to 505 residues: DNA repair protein RadA (505 aa).

Residues 10 to 27 (CSACGADHAQWFGRCPKC) form a C4-type zinc finger. An ATP-binding site is contributed by 107–114 (GDPGIGKS). The short motif at 281 to 285 (KNRFG) is the RadA KNRFG motif element. A lon-protease-like region spans residues 380–505 (DAYLSVAGGL…KIEEDLGKKD (126 aa)). The tract at residues 485-505 (NTTDQGNGSEAKIEEDLGKKD) is disordered. Residues 495–505 (AKIEEDLGKKD) are compositionally biased toward basic and acidic residues.

It belongs to the RecA family. RadA subfamily.

In terms of biological role, DNA-dependent ATPase involved in processing of recombination intermediates, plays a role in repairing DNA breaks. Stimulates the branch migration of RecA-mediated strand transfer reactions, allowing the 3' invading strand to extend heteroduplex DNA faster. Binds ssDNA in the presence of ADP but not other nucleotides, has ATPase activity that is stimulated by ssDNA and various branched DNA structures, but inhibited by SSB. Does not have RecA's homology-searching function. The polypeptide is DNA repair protein RadA (Synechocystis sp. (strain ATCC 27184 / PCC 6803 / Kazusa)).